Consider the following 504-residue polypeptide: Maturase K (504 aa).

It belongs to the intron maturase 2 family. MatK subfamily.

It is found in the plastid. It localises to the chloroplast. In terms of biological role, usually encoded in the trnK tRNA gene intron. Probably assists in splicing its own and other chloroplast group II introns. The chain is Maturase K from Gossypium turneri (Cotton).